We begin with the raw amino-acid sequence, 674 residues long: Probable protein phosphatase 2C 66 (674 aa).

S125 bears the Phosphoserine mark. Disordered stretches follow at residues 153-175 (YSGP…RKKP) and 202-247 (KSVI…KQSM). Positions 244–665 (KQSMNSVLDV…DDVSVIVISL (422 aa)) constitute a PPM-type phosphatase domain. Mn(2+) contacts are provided by D282 and G283. The segment covering 373 to 384 (NNKTKSDNRCDQ) has biased composition (basic and acidic residues). Positions 373-392 (NNKTKSDNRCDQKGSNSTTT) are disordered. Positions 593 and 656 each coordinate Mn(2+).

The protein belongs to the PP2C family. Mg(2+) serves as cofactor. Requires Mn(2+) as cofactor. In terms of tissue distribution, expressed at low level in seedlings, roots, leaves, stems, young inflorescences, flowers and siliques.

The protein resides in the nucleus. The enzyme catalyses O-phospho-L-seryl-[protein] + H2O = L-seryl-[protein] + phosphate. It carries out the reaction O-phospho-L-threonyl-[protein] + H2O = L-threonyl-[protein] + phosphate. The sequence is that of Probable protein phosphatase 2C 66 (PLL2) from Arabidopsis thaliana (Mouse-ear cress).